The following is a 942-amino-acid chain: Inter-alpha-trypsin inhibitor heavy chain H5 (942 aa).

The first 16 residues, Met-1–Gly-16, serve as a signal peptide directing secretion. One can recognise a VIT domain in the interval Val-35–Glu-161. Residues Asn-97 and Asn-127 are each glycosylated (N-linked (GlcNAc...) asparagine). 2 disordered regions span residues Lys-116 to Lys-136 and Ser-208 to Val-227. Asn-231, Asn-421, and Asn-508 each carry an N-linked (GlcNAc...) asparagine glycan. Positions Asn-295–Ile-478 constitute a VWFA domain. The interval Gln-550 to Asn-571 is disordered. N-linked (GlcNAc...) asparagine glycans are attached at residues Asn-776, Asn-795, and Asn-862.

This sequence belongs to the ITIH family. Abundantly expressed in placenta. Less abundant expression in mammary gland and ovary. Expression is barely detectable levels in all other tissues tested.

It is found in the secreted. Its function is as follows. May act as a tumor suppressor. The polypeptide is Inter-alpha-trypsin inhibitor heavy chain H5 (ITIH5) (Homo sapiens (Human)).